Consider the following 158-residue polypeptide: Ribonuclease H (158 aa).

The RNase H type-1 domain occupies 5-146; that stretch reads MRKQIEIFTD…CDQLAKQGAE (142 aa). Positions 14, 52, 74, and 138 each coordinate Mg(2+).

It belongs to the RNase H family. As to quaternary structure, monomer. Mg(2+) serves as cofactor.

The protein resides in the cytoplasm. The catalysed reaction is Endonucleolytic cleavage to 5'-phosphomonoester.. Endonuclease that specifically degrades the RNA of RNA-DNA hybrids. This Mannheimia succiniciproducens (strain KCTC 0769BP / MBEL55E) protein is Ribonuclease H.